Consider the following 145-residue polypeptide: Transcription antitermination protein NusB (145 aa).

The protein belongs to the NusB family.

In terms of biological role, involved in transcription antitermination. Required for transcription of ribosomal RNA (rRNA) genes. Binds specifically to the boxA antiterminator sequence of the ribosomal RNA (rrn) operons. This Burkholderia lata (strain ATCC 17760 / DSM 23089 / LMG 22485 / NCIMB 9086 / R18194 / 383) protein is Transcription antitermination protein NusB.